We begin with the raw amino-acid sequence, 316 residues long: Glutathione synthetase (316 aa).

The ATP-grasp domain maps to 125 to 310 (KLFTAWFSDL…ITGMLMDAIE (186 aa)). The N-beta-linked (GlcNAc) arginine glycan is linked to arginine 256. Residues glutamate 281 and asparagine 283 each contribute to the Mg(2+) site.

It belongs to the prokaryotic GSH synthase family. The cofactor is Mg(2+). Requires Mn(2+) as cofactor.

The enzyme catalyses gamma-L-glutamyl-L-cysteine + glycine + ATP = glutathione + ADP + phosphate + H(+). The protein operates within sulfur metabolism; glutathione biosynthesis; glutathione from L-cysteine and L-glutamate: step 2/2. The chain is Glutathione synthetase from Escherichia coli O127:H6 (strain E2348/69 / EPEC).